We begin with the raw amino-acid sequence, 572 residues long: MNLHQTVEHEAAAAFAAAGIADSPVVLQPTKNAEHGDFQINGVMGAAKKAKQNPRELAQKVADALAGNAVIESAEVAGPGFINLRLRPEFLAQNIQTALNDARFGVAKTDKPQTVVIDYSSPNLAKEMHVGHLRSSIIGDSISRVLEFMGNTVIRQNHVGDWGTQFGMLVAYLVEQQKDNAAFELADLEQFYRAAKVRFDEDPAFADTAREYVVKLQGGDETVLALWKQFVDISLSHAQAVYDTLGLKLRPEDVAGESKYNDDLQAVVDDLVQKGLAVEDDGAKVVFLDEFKNKEGEPAAFIVQKQGGGFLYASTDLACLRYRVGTLHADRLLYVVDHRQALHFEQLFTTSRKAGYLPENVGAAFVGFGTMMGKDGKPFKTRSGDTVKLVDLLTEAVERATALVKEKNPELGADEAAKIGKTVGIGAVKYADLSKNRTSDYVFDWDAMLSFEGNTAPYLQYAYTRVQSVFRKAGEWDADAPTVLTEPLEKQLAAELLKFENVLQSVADTAYPHYLAAYLYQIATLFSRFYEACPILKAEGASRNSRLQLAKLTGDTLKQGLDLLGIDVLDVM.

Residues 122–132 (PNLAKEMHVGH) carry the 'HIGH' region motif.

The protein belongs to the class-I aminoacyl-tRNA synthetase family. As to quaternary structure, monomer.

Its subcellular location is the cytoplasm. The catalysed reaction is tRNA(Arg) + L-arginine + ATP = L-arginyl-tRNA(Arg) + AMP + diphosphate. The chain is Arginine--tRNA ligase from Neisseria meningitidis serogroup C / serotype 2a (strain ATCC 700532 / DSM 15464 / FAM18).